The sequence spans 493 residues: 3-octaprenyl-4-hydroxybenzoate carboxy-lyase (493 aa).

A Mn(2+)-binding site is contributed by asparagine 172. Residues 175–177 (IYR), 189–191 (RWL), and 194–195 (RG) contribute to the prenylated FMN site. Glutamate 238 lines the Mn(2+) pocket. The active-site Proton donor is the aspartate 287.

This sequence belongs to the UbiD family. As to quaternary structure, homohexamer. Prenylated FMN serves as cofactor. It depends on Mn(2+) as a cofactor.

Its subcellular location is the cell membrane. It catalyses the reaction a 4-hydroxy-3-(all-trans-polyprenyl)benzoate + H(+) = a 2-(all-trans-polyprenyl)phenol + CO2. Its pathway is cofactor biosynthesis; ubiquinone biosynthesis. Functionally, catalyzes the decarboxylation of 3-octaprenyl-4-hydroxy benzoate to 2-octaprenylphenol, an intermediate step in ubiquinone biosynthesis. This is 3-octaprenyl-4-hydroxybenzoate carboxy-lyase from Shewanella piezotolerans (strain WP3 / JCM 13877).